We begin with the raw amino-acid sequence, 211 residues long: Probable cobalt-precorrin-7 C(5)-methyltransferase (211 aa).

This sequence belongs to the precorrin methyltransferase family.

The enzyme catalyses Co-precorrin-7 + S-adenosyl-L-methionine = Co-precorrin-8X + S-adenosyl-L-homocysteine + H(+). It participates in cofactor biosynthesis; adenosylcobalamin biosynthesis; cob(II)yrinate a,c-diamide from sirohydrochlorin (anaerobic route): step 8/10. Its function is as follows. Catalyzes the methylation of C-5 in cobalt-precorrin-7 to form cobalt-precorrin-8. This chain is Probable cobalt-precorrin-7 C(5)-methyltransferase (cbiE), found in Methanocaldococcus jannaschii (strain ATCC 43067 / DSM 2661 / JAL-1 / JCM 10045 / NBRC 100440) (Methanococcus jannaschii).